Reading from the N-terminus, the 1140-residue chain is Receptor-type guanylate cyclase gcy-3 (1140 aa).

The N-terminal stretch at 1-21 (MKNVFQLLIPLFFHLFSLVSL) is a signal peptide. The Extracellular portion of the chain corresponds to 22–495 (QNIPVSTGTT…CPLPFWEQYG (474 aa)). Residues asparagine 220, asparagine 301, asparagine 349, asparagine 385, asparagine 418, asparagine 441, and asparagine 459 are each glycosylated (N-linked (GlcNAc...) asparagine). Residues 496-516 (ILIFVGAGVFLIMITTNLICF) form a helical membrane-spanning segment. At 517–1140 (LFMIKNRREE…RQYKMDTLKI (624 aa)) the chain is on the cytoplasmic side. A Protein kinase domain is found at 538-826 (FVKLRELERK…NICEQLRDLM (289 aa)). ATP contacts are provided by residues 544–552 (LERKSKGTS) and lysine 582. The Guanylate cyclase domain occupies 897–1027 (TVFFSDVVKF…DTVNTASRME (131 aa)). The segment at 1083 to 1140 (PSISNRSTPPVTQERFTVRAPDTPEARSVSSHGSRPSSNHNNNNDPLYRQYKMDTLKI) is disordered. Residues 1084-1097 (SISNRSTPPVTQER) show a composition bias toward polar residues. A compositionally biased stretch (low complexity) spans 1109–1126 (RSVSSHGSRPSSNHNNNN).

This sequence belongs to the adenylyl cyclase class-4/guanylyl cyclase family. In terms of tissue distribution, expressed asymmetrically in ASE right (ASER) sensory neuron and bilaterally in ASI sensory neurons. Expressed in PVT interneuron.

It localises to the cell membrane. It carries out the reaction GTP = 3',5'-cyclic GMP + diphosphate. Its function is as follows. Guanylate cyclase involved in the production of the second messenger cGMP. This Caenorhabditis elegans protein is Receptor-type guanylate cyclase gcy-3.